The primary structure comprises 142 residues: Putative pre-16S rRNA nuclease (142 aa).

Belongs to the YqgF nuclease family.

Its subcellular location is the cytoplasm. Functionally, could be a nuclease involved in processing of the 5'-end of pre-16S rRNA. This Nitratidesulfovibrio vulgaris (strain DSM 19637 / Miyazaki F) (Desulfovibrio vulgaris) protein is Putative pre-16S rRNA nuclease.